Here is a 506-residue protein sequence, read N- to C-terminus: Glutamate--tRNA ligase (506 aa).

The 'HIGH' region motif lies at 24-34 (PSPTGLQHIGG). Residues C121, C123, C148, and H150 each contribute to the Zn(2+) site. Residues 266–270 (KLSKR) carry the 'KMSKS' region motif. Residue K269 participates in ATP binding.

The protein belongs to the class-I aminoacyl-tRNA synthetase family. Glutamate--tRNA ligase type 1 subfamily. Monomer. Zn(2+) is required as a cofactor.

It is found in the cytoplasm. The catalysed reaction is tRNA(Glu) + L-glutamate + ATP = L-glutamyl-tRNA(Glu) + AMP + diphosphate. Catalyzes the attachment of glutamate to tRNA(Glu) in a two-step reaction: glutamate is first activated by ATP to form Glu-AMP and then transferred to the acceptor end of tRNA(Glu). This Borrelia duttonii (strain Ly) protein is Glutamate--tRNA ligase.